The primary structure comprises 442 residues: Matrix remodeling-associated protein 8 (442 aa).

Residues 1 to 19 form the signal peptide; the sequence is MELLSRVLLWKLLLLQSSA. Topologically, residues 20 to 340 are extracellular; that stretch reads VLSSGPSGTA…PEDHTHFFQQ (321 aa). Ig-like V-type domains follow at residues 25 to 156 and 159 to 291; these read PSGT…LEVT and PLLS…LQVT. 2 cysteine pairs are disulfide-bonded: C53–C136 and C185–C271. N118 is a glycosylation site (N-linked (GlcNAc...) asparagine). Residues 128 to 130 carry the RGD 1 motif; that stretch reads RGD. S227 carries the post-translational modification Phosphoserine. Residues 251–253 carry the RGD 2 motif; that stretch reads RGD. The interval 296 to 319 is disordered; it reads EPPARASPGNGSGHSSAPSPDPTL. Residue N305 is glycosylated (N-linked (GlcNAc...) asparagine). Residues 341-361 form a helical membrane-spanning segment; it reads LGYVLATLLLFILLLITVVLA. Residues 362-442 are Cytoplasmic-facing; that stretch reads TRYRHSGGCK…DKEFRKEYCK (81 aa).

In terms of assembly, homodimer in cis. Does not appear to form trans-homodimers. Interacts with ITGB3; the interaction inhibits ITGAV:ITGB3 heterodimer formation. Widely expressed (at protein level). Highly expressed in brain where it localizes to the glia limitans, which is formed by the endfeet of astrocytes surrounding capillaries, and beneath the pia mater (at protein level). In lung, detected in epithelial cells of the bronchus (at protein level). Expressed in intercalated disks in the heart (at protein level). Detected in pancreatic alpha-cells in the islet of Langerhans (at protein level). In kidney, found in the brush border of the proximal convoluted tubule (at protein level). Expressed in the epithelium of the small intestine (at protein level). Weakly expressed in liver (at protein level). Detected in myeloid cells.

It is found in the cell membrane. Its subcellular location is the cell junction. It localises to the tight junction. The protein resides in the cytoplasm. The protein localises to the cell projection. It is found in the cilium membrane. Its subcellular location is the nucleus. Functionally, transmembrane protein which can modulate activity of various signaling pathways, probably via binding to integrin ITGAV:ITGB3. Mediates heterophilic cell-cell interactions in vitro. Inhibits osteoclastogenesis downstream of TNFSF11/RANKL and CSF1, where it may function by attenuating signaling via integrin ITGB3 and MAP kinase p38. Plays a role in cartilage formation where it promotes proliferation and maturation of growth plate chondrocytes. Stimulates formation of primary cilia in chondrocytes. Enhances expression of genes involved in the hedgehog signaling pathway in chondrocytes, including the hedgehog signaling molecule IHH; may also promote signaling via the PTHLH/PTHrP pathway. Plays a role in angiogenesis where it suppresses migration of endothelial cells and also promotes their apoptosis. Inhibits VEGF-induced activation of AKT and p38 MAP kinase in endothelial cells. Also inhibits VTN (vitronectin)-mediated integrin ITGAV:ITGB3 signaling and activation of PTK2/FAK. May play a role in the maturation and maintenance of the blood-brain barrier. The chain is Matrix remodeling-associated protein 8 from Mus musculus (Mouse).